The chain runs to 206 residues: A-type ATP synthase subunit E (206 aa).

This sequence belongs to the V-ATPase E subunit family. In terms of assembly, has multiple subunits with at least A(3), B(3), C, D, E, F, H, I and proteolipid K(x).

Its subcellular location is the cell membrane. Component of the A-type ATP synthase that produces ATP from ADP in the presence of a proton gradient across the membrane. This chain is A-type ATP synthase subunit E, found in Methanothermobacter thermautotrophicus (strain ATCC 29096 / DSM 1053 / JCM 10044 / NBRC 100330 / Delta H) (Methanobacterium thermoautotrophicum).